We begin with the raw amino-acid sequence, 485 residues long: Glycogen synthase (485 aa).

An ADP-alpha-D-glucose-binding site is contributed by lysine 20.

The protein belongs to the glycosyltransferase 1 family. Bacterial/plant glycogen synthase subfamily.

The enzyme catalyses [(1-&gt;4)-alpha-D-glucosyl](n) + ADP-alpha-D-glucose = [(1-&gt;4)-alpha-D-glucosyl](n+1) + ADP + H(+). The protein operates within glycan biosynthesis; glycogen biosynthesis. Its function is as follows. Synthesizes alpha-1,4-glucan chains using ADP-glucose. The polypeptide is Glycogen synthase (Vibrio parahaemolyticus serotype O3:K6 (strain RIMD 2210633)).